We begin with the raw amino-acid sequence, 573 residues long: Sulfite reductase [NADPH] hemoprotein beta-component (573 aa).

4 residues coordinate [4Fe-4S] cluster: Cys438, Cys444, Cys483, and Cys487. Cys487 contacts siroheme.

This sequence belongs to the nitrite and sulfite reductase 4Fe-4S domain family. In terms of assembly, alpha(8)-beta(8). The alpha component is a flavoprotein, the beta component is a hemoprotein. Siroheme serves as cofactor. [4Fe-4S] cluster is required as a cofactor.

The enzyme catalyses hydrogen sulfide + 3 NADP(+) + 3 H2O = sulfite + 3 NADPH + 4 H(+). The protein operates within sulfur metabolism; hydrogen sulfide biosynthesis; hydrogen sulfide from sulfite (NADPH route): step 1/1. Its function is as follows. Component of the sulfite reductase complex that catalyzes the 6-electron reduction of sulfite to sulfide. This is one of several activities required for the biosynthesis of L-cysteine from sulfate. This Geobacillus thermodenitrificans (strain NG80-2) protein is Sulfite reductase [NADPH] hemoprotein beta-component.